A 503-amino-acid chain; its full sequence is UDP-N-acetylmuramoylalanine--D-glutamate ligase (503 aa).

129–135 (GTNGKTT) lines the ATP pocket.

It belongs to the MurCDEF family.

Its subcellular location is the cytoplasm. It catalyses the reaction UDP-N-acetyl-alpha-D-muramoyl-L-alanine + D-glutamate + ATP = UDP-N-acetyl-alpha-D-muramoyl-L-alanyl-D-glutamate + ADP + phosphate + H(+). It participates in cell wall biogenesis; peptidoglycan biosynthesis. Cell wall formation. Catalyzes the addition of glutamate to the nucleotide precursor UDP-N-acetylmuramoyl-L-alanine (UMA). This is UDP-N-acetylmuramoylalanine--D-glutamate ligase from Burkholderia orbicola (strain MC0-3).